The following is an 837-amino-acid chain: Intestinal mucin-like protein (837 aa).

4 consecutive repeat copies span residues 17–27, 28–38, 39–50, and 51–62. The segment at 17–70 is 5 X 11 AA approximate tandem repeats; the sequence is PSTPSTPPPSTPTTPTSSQTTTPSTPSTTSSKSTPSTPQSTSSKSTPSTPPKTT. The segment at 17-75 is disordered; that stretch reads PSTPSTPPPSTPTTPTSSQTTTPSTPSTTSSKSTPSTPQSTSSKSTPSTPPKTTLPGCL. Positions 29–70 are enriched in low complexity; that stretch reads TTPTSSQTTTPSTPSTTSSKSTPSTPQSTSSKSTPSTPPKTT. A 5; truncated repeat occupies 63–70; sequence PSTPPKTT. 2 N-linked (GlcNAc...) asparagine glycosylation sites follow: Asn91 and Asn164. Residues 141–324 form the VWFD domain; it reads CYCTGWGDPH…VNDPSKPHCP (184 aa). 3 disulfide bridges follow: Cys143-Cys284, Cys165-Cys323, and Cys189-Cys197. Residues 149–837 are probably important for disulfide-bond mediated mucin polymerization (link domain); it reads PHFVTFDGLY…RSSPRLLGRK (689 aa). N-linked (GlcNAc...) asparagine glycans are attached at residues Asn278, Asn289, Asn344, Asn410, Asn444, Asn515, Asn538, Asn612, Asn627, Asn695, Asn727, and Asn749. VWFC domains follow at residues 472–543 and 581–648; these read CGCV…TSCK and GVCV…KKCQ. Cystine bridges form between Cys732–Cys779, Cys746–Cys793, Cys755–Cys809, and Cys759–Cys811. In terms of domain architecture, CTCK spans 732 to 817; the sequence is CSAIPVMKEI…SCLCQGTVCE (86 aa).

Multimeric. As to expression, coats the epithelia of the intestines.

It localises to the secreted. This chain is Intestinal mucin-like protein, found in Rattus norvegicus (Rat).